Reading from the N-terminus, the 281-residue chain is MIENRPWLTIFSHTMLILGIAVILFPLYVAFVAATLDKQEVYAAPMTLIPGTHLLENIHNIWVNGVGTNSAPFWRMLLNSFVMAFSITLGKITVSMLSAFAIVWFRFPLRNLFFWMIFITLMLPVEVRIFPTVEVIANLKMLDSYAGLTLPLMASATATFLFRQFFMTLPDELVEAARIDGASPMRFFCDIVFPLSKTNLAALFVITFIYGWNQYLWPLLIITDVDLGTTVAGIKGMIATGEGTTEWNSVMAAMLLTLIPPVVIVLVMQRAFVRGLVDSEK.

A run of 6 helical transmembrane segments spans residues 16–36 (LILG…AATL), 85–105 (FSIT…IVWF), 113–133 (FFWM…FPTV), 142–162 (LDSY…TFLF), 202–222 (ALFV…LLII), and 247–267 (WNSV…IVLV). The ABC transmembrane type-1 domain occupies 77–268 (LLNSFVMAFS…IPPVVIVLVM (192 aa)).

This sequence belongs to the binding-protein-dependent transport system permease family. UgpAE subfamily. As to quaternary structure, the complex is composed of two ATP-binding proteins (UgpC), two transmembrane proteins (UgpA and UgpE) and a solute-binding protein (UgpB).

The protein localises to the cell inner membrane. Functionally, part of the ABC transporter complex UgpBAEC involved in sn-glycerol-3-phosphate (G3P) import. Probably responsible for the translocation of the substrate across the membrane. This chain is sn-glycerol-3-phosphate transport system permease protein UgpE (ugpE), found in Escherichia coli O6:K15:H31 (strain 536 / UPEC).